We begin with the raw amino-acid sequence, 274 residues long: 2,3,4,5-tetrahydropyridine-2,6-dicarboxylate N-succinyltransferase (274 aa).

Residues Arg-106 and Asp-143 each coordinate substrate.

This sequence belongs to the transferase hexapeptide repeat family. As to quaternary structure, homotrimer.

Its subcellular location is the cytoplasm. The catalysed reaction is (S)-2,3,4,5-tetrahydrodipicolinate + succinyl-CoA + H2O = (S)-2-succinylamino-6-oxoheptanedioate + CoA. It functions in the pathway amino-acid biosynthesis; L-lysine biosynthesis via DAP pathway; LL-2,6-diaminopimelate from (S)-tetrahydrodipicolinate (succinylase route): step 1/3. The sequence is that of 2,3,4,5-tetrahydropyridine-2,6-dicarboxylate N-succinyltransferase from Paracidovorax citrulli (strain AAC00-1) (Acidovorax citrulli).